Here is a 225-residue protein sequence, read N- to C-terminus: UPF0758 protein Sez_1052 (225 aa).

Positions 102–224 constitute an MPN domain; the sequence is PVLSSAQVAE…YYSFREKSDL (123 aa). 3 residues coordinate Zn(2+): H173, H175, and D186. Residues 173-186 carry the JAMM motif motif; that stretch reads HNHPSGLTKPSAND.

Belongs to the UPF0758 family.

The polypeptide is UPF0758 protein Sez_1052 (Streptococcus equi subsp. zooepidemicus (strain MGCS10565)).